The following is a 428-amino-acid chain: Glutamate-1-semialdehyde 2,1-aminomutase 2 (428 aa).

The residue at position 267 (Lys267) is an N6-(pyridoxal phosphate)lysine.

This sequence belongs to the class-III pyridoxal-phosphate-dependent aminotransferase family. HemL subfamily. As to quaternary structure, homodimer. The cofactor is pyridoxal 5'-phosphate.

It localises to the cytoplasm. The enzyme catalyses (S)-4-amino-5-oxopentanoate = 5-aminolevulinate. The protein operates within porphyrin-containing compound metabolism; protoporphyrin-IX biosynthesis; 5-aminolevulinate from L-glutamyl-tRNA(Glu): step 2/2. This Oceanobacillus iheyensis (strain DSM 14371 / CIP 107618 / JCM 11309 / KCTC 3954 / HTE831) protein is Glutamate-1-semialdehyde 2,1-aminomutase 2.